We begin with the raw amino-acid sequence, 22 residues long: Brain peptide MVPVPVHHMADELLRNGPDTVI (22 aa).

This chain is Brain peptide MVPVPVHHMADELLRNGPDTVI, found in Apis mellifera (Honeybee).